Consider the following 736-residue polypeptide: Exo-oligoalginate lyase (736 aa).

The N-terminal stretch at 1 to 23 (MLSVNTIKNTLLAAVLVSVPATA) is a signal peptide. Residues Lys-136, 146-149 (QSLN), Lys-198, His-202, and 257-260 (YYQR) contribute to the substrate site. Tyr-258 serves as the catalytic Proton donor. His-413 acts as the Proton acceptor in catalysis. 2 residues coordinate Zn(2+): His-415 and Asp-433. Residue Arg-438 participates in substrate binding. His-464 is a Zn(2+) binding site. Glu-667 is a substrate binding site.

It belongs to the polysaccharide lyase 17 family. Homodimer. Zn(2+) serves as cofactor.

The protein resides in the periplasm. It carries out the reaction Cleavage of 4-deoxy-alpha-L-erythro-hex-4-enopyranuronoside oligosaccharides into 4-deoxy-alpha-L-erythro-hex-4-enopyranuronate monosaccharides.. Catalyzes the depolymerization of alginate through an exolytic mode of action, via a beta-elimination mechanism. Preferentially acts on oligoalginates with degrees of polymerization higher than 2 to produce the alginate monomer, 4-deoxy-L-erythro-5-hexoseulose uronic acid. The sequence is that of Exo-oligoalginate lyase from Saccharophagus degradans (strain 2-40 / ATCC 43961 / DSM 17024).